A 345-amino-acid chain; its full sequence is Endochitinase 4 (345 aa).

Residues 1–27 (MAPLLNTGLVILPLIVSTLLGPMPAFA) form the signal peptide. Asparagine 29 and asparagine 89 each carry an N-linked (GlcNAc...) asparagine glycan. Positions 41–345 (KVLQGYWENW…TFGDNVKGRL (305 aa)) constitute a GH18 domain. Glutamate 163 acts as the Proton donor in catalysis. Asparagine 316 carries N-linked (GlcNAc...) asparagine glycosylation.

Belongs to the glycosyl hydrolase 18 family. Chitinase class V subfamily.

Its subcellular location is the secreted. It catalyses the reaction Random endo-hydrolysis of N-acetyl-beta-D-glucosaminide (1-&gt;4)-beta-linkages in chitin and chitodextrins.. Its function is as follows. Secreted chitinase involved in the degradation of chitin, a component of the cell walls of fungi and exoskeletal elements of some animals (including worms and arthropods). Participates in the infection process and directly acts in the penetration process of the host cuticle. The protein is Endochitinase 4 (chi4) of Metarhizium robertsii (strain ARSEF 23 / ATCC MYA-3075) (Metarhizium anisopliae (strain ARSEF 23)).